The chain runs to 424 residues: UPF0761 membrane protein Smlt0865 (424 aa).

Helical transmembrane passes span 48-68 (VFAL…FPVF), 101-121 (SAGQ…LITL), 144-164 (FLVY…SLAV), 181-201 (WLAE…CITL), 216-236 (AVPG…GIGA), and 251-271 (VAFV…VLLG).

It belongs to the UPF0761 family.

The protein resides in the cell inner membrane. The sequence is that of UPF0761 membrane protein Smlt0865 from Stenotrophomonas maltophilia (strain K279a).